Reading from the N-terminus, the 118-residue chain is UPF0102 protein NE0711 (118 aa).

Belongs to the UPF0102 family.

This is UPF0102 protein NE0711 from Nitrosomonas europaea (strain ATCC 19718 / CIP 103999 / KCTC 2705 / NBRC 14298).